The primary structure comprises 300 residues: Meiotically up-regulated gene 165 protein (300 aa).

2 disordered regions span residues 1–38 (MLEK…HKPS) and 50–109 (TNSS…STLE). The span at 21–38 (ESHTFSSQTDDSYFHKPS) shows a compositional bias: polar residues. The span at 52–69 (SSVPSASRSPESIASSQS) shows a compositional bias: low complexity. The span at 94-103 (TLRKRGRKPK) shows a compositional bias: basic residues.

Its subcellular location is the nucleus. Its function is as follows. Has a role in meiosis. The polypeptide is Meiotically up-regulated gene 165 protein (mug165) (Schizosaccharomyces pombe (strain 972 / ATCC 24843) (Fission yeast)).